A 427-amino-acid chain; its full sequence is Peptidase B (427 aa).

Mn(2+) contacts are provided by lysine 195 and aspartate 200. Lysine 207 is a catalytic residue. Mn(2+) contacts are provided by aspartate 218, aspartate 277, and glutamate 279. Residue arginine 281 is part of the active site.

It belongs to the peptidase M17 family. In terms of assembly, homohexamer. Requires Mn(2+) as cofactor.

The protein localises to the cytoplasm. The enzyme catalyses Release of an N-terminal amino acid, Xaa, from a peptide or arylamide. Xaa is preferably Glu or Asp but may be other amino acids, including Leu, Met, His, Cys and Gln.. Probably plays an important role in intracellular peptide degradation. This chain is Peptidase B, found in Escherichia coli (strain SMS-3-5 / SECEC).